Here is a 326-residue protein sequence, read N- to C-terminus: Probable fructokinase-4 (326 aa).

This sequence belongs to the carbohydrate kinase PfkB family.

The catalysed reaction is D-fructose + ATP = D-fructose 6-phosphate + ADP + H(+). It participates in glycan biosynthesis; starch biosynthesis. Its function is as follows. May play an important role in maintaining the flux of carbon towards starch formation. In Arabidopsis thaliana (Mouse-ear cress), this protein is Probable fructokinase-4.